A 425-amino-acid chain; its full sequence is Bifunctional phosphoribosylaminoimidazole carboxylase/phosphoribosylaminoimidazole succinocarboxamide synthetase (425 aa).

Alanine 2 carries the post-translational modification N-acetylalanine. An SAICAR synthetase domain region spans residues 2–260 (ATAEVLNIGR…WVADRVELLL (259 aa)). At tyrosine 22 the chain carries Phosphotyrosine. Serine 27 carries the post-translational modification Phosphoserine. An N6-acetyllysine modification is found at lysine 36. Serine 107 is subject to Phosphoserine. Threonine 238 carries the post-translational modification Phosphothreonine. Lysine 247 bears the N6-acetyllysine mark. The linker stretch occupies residues 261–266 (KSNSQC). Residues 267–425 (RVVVLMGSTS…ADKKIRECNL (159 aa)) form an AIR carboxylase domain region. Serine 274 bears the Phosphoserine mark. Residue serine 332 coordinates CO2.

In the N-terminal section; belongs to the SAICAR synthetase family. It in the C-terminal section; belongs to the AIR carboxylase family. Class II subfamily. As to quaternary structure, homooctamer.

The catalysed reaction is 5-amino-1-(5-phospho-D-ribosyl)imidazole-4-carboxylate + L-aspartate + ATP = (2S)-2-[5-amino-1-(5-phospho-beta-D-ribosyl)imidazole-4-carboxamido]succinate + ADP + phosphate + 2 H(+). It catalyses the reaction 5-amino-1-(5-phospho-D-ribosyl)imidazole-4-carboxylate + H(+) = 5-amino-1-(5-phospho-beta-D-ribosyl)imidazole + CO2. Its pathway is purine metabolism; IMP biosynthesis via de novo pathway; 5-amino-1-(5-phospho-D-ribosyl)imidazole-4-carboxamide from 5-amino-1-(5-phospho-D-ribosyl)imidazole-4-carboxylate: step 1/2. The protein operates within purine metabolism; IMP biosynthesis via de novo pathway; 5-amino-1-(5-phospho-D-ribosyl)imidazole-4-carboxylate from 5-amino-1-(5-phospho-D-ribosyl)imidazole (carboxylase route): step 1/1. Bifunctional phosphoribosylaminoimidazole carboxylase and phosphoribosylaminoimidazole succinocarboxamide synthetase catalyzing two reactions of the de novo purine biosynthetic pathway. The chain is Bifunctional phosphoribosylaminoimidazole carboxylase/phosphoribosylaminoimidazole succinocarboxamide synthetase from Rattus norvegicus (Rat).